The primary structure comprises 334 residues: N-acetyl-gamma-glutamyl-phosphate reductase (334 aa).

Cys142 is a catalytic residue.

This sequence belongs to the NAGSA dehydrogenase family. Type 1 subfamily.

It localises to the cytoplasm. It carries out the reaction N-acetyl-L-glutamate 5-semialdehyde + phosphate + NADP(+) = N-acetyl-L-glutamyl 5-phosphate + NADPH + H(+). Its pathway is amino-acid biosynthesis; L-arginine biosynthesis; N(2)-acetyl-L-ornithine from L-glutamate: step 3/4. In terms of biological role, catalyzes the NADPH-dependent reduction of N-acetyl-5-glutamyl phosphate to yield N-acetyl-L-glutamate 5-semialdehyde. This is N-acetyl-gamma-glutamyl-phosphate reductase from Pelodictyon phaeoclathratiforme (strain DSM 5477 / BU-1).